The following is a 131-amino-acid chain: Small ribosomal subunit protein bS16 (131 aa).

Over residues 87–117 (IGKSKQEELRKSEAKTSAKNKKANEEKANEE) the composition is skewed to basic and acidic residues. The disordered stretch occupies residues 87–131 (IGKSKQEELRKSEAKTSAKNKKANEEKANEEKVEESETLEASSEA).

It belongs to the bacterial ribosomal protein bS16 family.

This Prochlorococcus marinus (strain SARG / CCMP1375 / SS120) protein is Small ribosomal subunit protein bS16.